Here is a 273-residue protein sequence, read N- to C-terminus: Large ribosomal subunit protein uL2 (273 aa).

The tract at residues 222-273 is disordered; it reads GMAMNPVDHPHGGGEGRNKGIQPVSPWGTPAKGYRTRSNKRTDKYIVRRRNK. Basic and acidic residues predominate over residues 229–239; it reads DHPHGGGEGRN.

This sequence belongs to the universal ribosomal protein uL2 family. In terms of assembly, part of the 50S ribosomal subunit. Forms a bridge to the 30S subunit in the 70S ribosome.

Its function is as follows. One of the primary rRNA binding proteins. Required for association of the 30S and 50S subunits to form the 70S ribosome, for tRNA binding and peptide bond formation. It has been suggested to have peptidyltransferase activity; this is somewhat controversial. Makes several contacts with the 16S rRNA in the 70S ribosome. The protein is Large ribosomal subunit protein uL2 of Tolumonas auensis (strain DSM 9187 / NBRC 110442 / TA 4).